A 168-amino-acid polypeptide reads, in one-letter code: G/U mismatch-specific DNA glycosylase (168 aa).

This sequence belongs to the uracil-DNA glycosylase (UDG) superfamily. TDG/mug family. In terms of assembly, binds DNA as a monomer.

The protein resides in the cytoplasm. It catalyses the reaction Specifically hydrolyzes mismatched double-stranded DNA and polynucleotides, releasing free uracil.. Functionally, excises ethenocytosine and uracil, which can arise by alkylation or deamination of cytosine, respectively, from the corresponding mispairs with guanine in ds-DNA. It is capable of hydrolyzing the carbon-nitrogen bond between the sugar-phosphate backbone of the DNA and the mispaired base. The complementary strand guanine functions in substrate recognition. Required for DNA damage lesion repair in stationary-phase cells. The protein is G/U mismatch-specific DNA glycosylase of Cronobacter sakazakii (strain ATCC BAA-894) (Enterobacter sakazakii).